A 250-amino-acid polypeptide reads, in one-letter code: MPRKNYIYNLKPFFNPSKNERKKSTFICYAMKKVSEIDVARSHLNRALLPIDPKTGNVLPRFRRLNKHRACAMRAIVPAMLYYFNINSKLVEASIEKLADECGLSTLSDSGNKSITRASRLISEFLEPMGFVKCKKINSKSMSNYIPKKIFLTPMFFMLCGISPSEINHFLSKKIKPLKKLKKQEKSAFISFTDMKIISQLDERSARTKILNALINYYTASELTKIGPKGLKKKIDIEYSNLCNLYKKKS.

Belongs to the IncFII RepA family.

Functionally, this protein is essential for plasmid replication; it is involved in copy control functions. This is Probable replication-associated protein repA2 (repA2) from Buchnera aphidicola subsp. Acyrthosiphon pisum (strain APS) (Acyrthosiphon pisum symbiotic bacterium).